Reading from the N-terminus, the 310-residue chain is tRNA dimethylallyltransferase (310 aa).

Residue 14–21 coordinates ATP; sequence GPTASGKT. 16-21 serves as a coordination point for substrate; that stretch reads TASGKT. 3 interaction with substrate tRNA regions span residues 39 to 42, 163 to 167, and 244 to 249; these read DSAL, QRLSR, and RCVGYR.

It belongs to the IPP transferase family. Monomer. Requires Mg(2+) as cofactor.

The enzyme catalyses adenosine(37) in tRNA + dimethylallyl diphosphate = N(6)-dimethylallyladenosine(37) in tRNA + diphosphate. Catalyzes the transfer of a dimethylallyl group onto the adenine at position 37 in tRNAs that read codons beginning with uridine, leading to the formation of N6-(dimethylallyl)adenosine (i(6)A). The protein is tRNA dimethylallyltransferase of Tolumonas auensis (strain DSM 9187 / NBRC 110442 / TA 4).